The sequence spans 382 residues: SPRY domain-containing protein C285.10c (382 aa).

Residues 21-41 (LAILFIFIALAAVIVLLICLL) form a helical membrane-spanning segment. A B30.2/SPRY domain is found at 79-284 (GFSLLDDMGK…LHVNLGQAGY (206 aa)). The segment at 304 to 382 (APPPSYSTSQ…MHSMPATDEV (79 aa)) is disordered. Polar residues-rich tracts occupy residues 309 to 334 (YSTSQPTISWDAASESSAGTTTQGDT) and 361 to 372 (FSPSSSNNQAYQ).

Its subcellular location is the cytoplasm. It is found in the membrane. The protein is SPRY domain-containing protein C285.10c of Schizosaccharomyces pombe (strain 972 / ATCC 24843) (Fission yeast).